The primary structure comprises 336 residues: Anthranilate phosphoribosyltransferase (336 aa).

5-phospho-alpha-D-ribose 1-diphosphate-binding positions include Gly82, 85-86 (GD), Thr90, 92-95 (NVST), 110-118 (KHGNRSVSS), and Ser122. An anthranilate-binding site is contributed by Gly82. Ser94 provides a ligand contact to Mg(2+). Residue Asn113 coordinates anthranilate. Arg168 provides a ligand contact to anthranilate. Asp227 and Glu228 together coordinate Mg(2+).

It belongs to the anthranilate phosphoribosyltransferase family. Homodimer. Mg(2+) serves as cofactor.

It catalyses the reaction N-(5-phospho-beta-D-ribosyl)anthranilate + diphosphate = 5-phospho-alpha-D-ribose 1-diphosphate + anthranilate. The protein operates within amino-acid biosynthesis; L-tryptophan biosynthesis; L-tryptophan from chorismate: step 2/5. Its function is as follows. Catalyzes the transfer of the phosphoribosyl group of 5-phosphorylribose-1-pyrophosphate (PRPP) to anthranilate to yield N-(5'-phosphoribosyl)-anthranilate (PRA). In Leptospira borgpetersenii serovar Hardjo-bovis (strain JB197), this protein is Anthranilate phosphoribosyltransferase.